The following is a 410-amino-acid chain: F-box/WD repeat-containing protein 4 (410 aa).

One can recognise an F-box domain in the interval G23–I69. 4 WD repeats span residues G159–Y196, A198–C235, P289–V327, and P333–A372.

As to quaternary structure, part of a SCF (SKP1-cullin-F-box) protein ligase complex. Interacts with POUF51.

Probably recognizes and binds to some phosphorylated proteins and promotes their ubiquitination and degradation. Likely to be involved in key signaling pathways crucial for normal limb development. May participate in Wnt signaling. This is F-box/WD repeat-containing protein 4 (Fbxw4) from Mus musculus (Mouse).